The following is a 395-amino-acid chain: Elongation factor Tu (395 aa).

In terms of domain architecture, tr-type G spans 10-204; sequence LPHVNIGTIG…AVDEYIPTPQ (195 aa). The G1 stretch occupies residues 19-26; it reads GHVDHGKT. GTP is bound at residue 19-26; sequence GHVDHGKT. T26 provides a ligand contact to Mg(2+). The tract at residues 60-64 is G2; sequence GITIN. The G3 stretch occupies residues 81–84; the sequence is DCPG. Residues 81 to 85 and 136 to 139 each bind GTP; these read DCPGH and NKCD. Positions 136–139 are G4; it reads NKCD. The interval 174-176 is G5; that stretch reads SAL.

It belongs to the TRAFAC class translation factor GTPase superfamily. Classic translation factor GTPase family. EF-Tu/EF-1A subfamily. In terms of assembly, monomer.

The protein localises to the cytoplasm. The catalysed reaction is GTP + H2O = GDP + phosphate + H(+). In terms of biological role, GTP hydrolase that promotes the GTP-dependent binding of aminoacyl-tRNA to the A-site of ribosomes during protein biosynthesis. The chain is Elongation factor Tu from Mycoplasma capricolum subsp. capricolum (strain California kid / ATCC 27343 / NCTC 10154).